The chain runs to 559 residues: AP-4 complex accessory subunit tepsin (559 aa).

Residues 2-135 form the ENTH domain; the sequence is LDRLAFLQQL…FSESIPSPSH (134 aa). Disordered stretches follow at residues 131-157, 214-290, and 472-491; these read PSPS…APAL, AIPS…ESLD, and PNGA…SDPA. Low complexity-rich tracts occupy residues 144-154 and 266-281; these read QSGMGSQASSA and SRSS…DGQS. Polar residues predominate over residues 472–485; the sequence is PNGAANQKNPNGST.

It is found in the golgi apparatus. The protein resides in the trans-Golgi network membrane. Its subcellular location is the cytoplasmic vesicle. It localises to the cytoplasm. The protein localises to the cytosol. May play a role in vesicular trafficking of proteins at the trans-Golgi network. The sequence is that of AP-4 complex accessory subunit tepsin from Xenopus laevis (African clawed frog).